A 187-amino-acid polypeptide reads, in one-letter code: Ribosome-recycling factor (187 aa).

The protein belongs to the RRF family.

The protein localises to the cytoplasm. Functionally, responsible for the release of ribosomes from messenger RNA at the termination of protein biosynthesis. May increase the efficiency of translation by recycling ribosomes from one round of translation to another. This is Ribosome-recycling factor from Methylobacterium radiotolerans (strain ATCC 27329 / DSM 1819 / JCM 2831 / NBRC 15690 / NCIMB 10815 / 0-1).